Here is a 68-residue protein sequence, read N- to C-terminus: Large ribosomal subunit protein uL30 (68 aa).

This sequence belongs to the universal ribosomal protein uL30 family. In terms of assembly, part of the 50S ribosomal subunit.

The polypeptide is Large ribosomal subunit protein uL30 (Paenarthrobacter aurescens (strain TC1)).